Consider the following 254-residue polypeptide: Imidazole glycerol phosphate synthase subunit HisF (254 aa).

Catalysis depends on residues D11 and D130.

The protein belongs to the HisA/HisF family. In terms of assembly, heterodimer of HisH and HisF.

The protein resides in the cytoplasm. The enzyme catalyses 5-[(5-phospho-1-deoxy-D-ribulos-1-ylimino)methylamino]-1-(5-phospho-beta-D-ribosyl)imidazole-4-carboxamide + L-glutamine = D-erythro-1-(imidazol-4-yl)glycerol 3-phosphate + 5-amino-1-(5-phospho-beta-D-ribosyl)imidazole-4-carboxamide + L-glutamate + H(+). Its pathway is amino-acid biosynthesis; L-histidine biosynthesis; L-histidine from 5-phospho-alpha-D-ribose 1-diphosphate: step 5/9. In terms of biological role, IGPS catalyzes the conversion of PRFAR and glutamine to IGP, AICAR and glutamate. The HisF subunit catalyzes the cyclization activity that produces IGP and AICAR from PRFAR using the ammonia provided by the HisH subunit. The chain is Imidazole glycerol phosphate synthase subunit HisF from Laribacter hongkongensis (strain HLHK9).